Reading from the N-terminus, the 236-residue chain is Cytochrome c biogenesis ATP-binding export protein CcmA (236 aa).

The ABC transporter domain occupies Leu14–Glu235. Position 46–53 (Gly46–Thr53) interacts with ATP.

This sequence belongs to the ABC transporter superfamily. CcmA exporter (TC 3.A.1.107) family. As to quaternary structure, the complex is composed of two ATP-binding proteins (CcmA) and two transmembrane proteins (CcmB).

It localises to the cell inner membrane. It carries out the reaction heme b(in) + ATP + H2O = heme b(out) + ADP + phosphate + H(+). In terms of biological role, part of the ABC transporter complex CcmAB involved in the biogenesis of c-type cytochromes; once thought to export heme, this seems not to be the case, but its exact role is uncertain. Responsible for energy coupling to the transport system. In Alkalilimnicola ehrlichii (strain ATCC BAA-1101 / DSM 17681 / MLHE-1), this protein is Cytochrome c biogenesis ATP-binding export protein CcmA.